The primary structure comprises 101 residues: Replication restart protein PriB (101 aa).

Residues 1 to 101 (MTTNNLVLAG…LHAENVELKT (101 aa)) form the SSB domain.

It belongs to the PriB family. Homodimer. Interacts with PriA and DnaT. Component of the replication restart primosome. Primosome assembly occurs via a 'hand-off' mechanism. PriA binds to replication forks, subsequently PriB then DnaT bind; DnaT then displaces ssDNA to generate the helicase loading substrate.

Its function is as follows. Involved in the restart of stalled replication forks, which reloads the replicative helicase on sites other than the origin of replication; the PriA-PriB pathway is the major replication restart pathway. During primosome assembly it facilitates complex formation between PriA and DnaT on DNA; stabilizes PriA on DNA. Stimulates the DNA unwinding activity of PriA helicase. This chain is Replication restart protein PriB, found in Shewanella pealeana (strain ATCC 700345 / ANG-SQ1).